A 971-amino-acid chain; its full sequence is Nucleolar protein dao-5 (971 aa).

Disordered regions lie at residues 61-926 and 938-971; these read RIAS…QWGQ and KAFR…DSDD. A compositionally biased stretch (low complexity) spans 134–150; the sequence is KKPAQTPAQKKAASSSD. The span at 180 to 190 shows a compositional bias: acidic residues; the sequence is SDSDSDSEDSD. 17 stretches are compositionally biased toward low complexity: residues 264–275, 294–304, 324–335, 355–366, 386–397, 417–428, 447–457, 476–498, 508–519, 539–550, 569–579, 598–620, 630–641, 691–712, 751–761, 780–791, and 815–825; these read AKPAPAKATPKP, KKTPAKAAPKP, AKPTPAKATPKP, AKPTSAKATPKP, AKST…SSSD, AKPTPANATPKP, KATP…SSSD, AKPTPKATPKQ, KKTPAKSTPAKT, and ATTPAKSTPKT. The span at 907 to 921 shows a compositional bias: basic and acidic residues; the sequence is SVSEKFRNNQHDSHF. Residues 939–950 show a composition bias toward basic residues; that stretch reads AFRHEKTKKKKG. Over residues 957-971 the composition is skewed to polar residues; it reads INQSINSIKFSDSDD.

This sequence belongs to the NOLC1 family. In terms of assembly, may form dimers. Interacts with RNA polymerase I. Expressed in the nerve ring and hypodermal tissues. Expressed in the intestine. Expressed in the germline.

The protein resides in the nucleus. It is found in the nucleolus. Its subcellular location is the nucleoplasm. In terms of biological role, nucleolar protein which binds to RNA polymerase I and rDNA and is required for efficient RNA polymerase I-mediated rDNA transcription. Maintains the epigenetically active status of rDNA chromatin which facilitates rDNA transcription and sustains germline development, ensuring fertility. Plays a role in the modulation of nucleolus size. May play a role in the regulation of lifespan. This chain is Nucleolar protein dao-5, found in Caenorhabditis elegans.